Reading from the N-terminus, the 228-residue chain is Leucyl/phenylalanyl-tRNA--protein transferase (228 aa).

It belongs to the L/F-transferase family.

It localises to the cytoplasm. It carries out the reaction N-terminal L-lysyl-[protein] + L-leucyl-tRNA(Leu) = N-terminal L-leucyl-L-lysyl-[protein] + tRNA(Leu) + H(+). The catalysed reaction is N-terminal L-arginyl-[protein] + L-leucyl-tRNA(Leu) = N-terminal L-leucyl-L-arginyl-[protein] + tRNA(Leu) + H(+). The enzyme catalyses L-phenylalanyl-tRNA(Phe) + an N-terminal L-alpha-aminoacyl-[protein] = an N-terminal L-phenylalanyl-L-alpha-aminoacyl-[protein] + tRNA(Phe). Functions in the N-end rule pathway of protein degradation where it conjugates Leu, Phe and, less efficiently, Met from aminoacyl-tRNAs to the N-termini of proteins containing an N-terminal arginine or lysine. This Thiobacillus denitrificans (strain ATCC 25259 / T1) protein is Leucyl/phenylalanyl-tRNA--protein transferase.